Reading from the N-terminus, the 217-residue chain is Ribulose-phosphate 3-epimerase (217 aa).

Ser-6 contacts substrate. 3 residues coordinate a divalent metal cation: His-29, Asp-31, and His-62. Asp-31 (proton acceptor) is an active-site residue. Residues His-62, 138-141, 171-173, and 193-194 each bind substrate; these read GFGG, DGG, and GS. Residue Asp-171 coordinates a divalent metal cation. The active-site Proton donor is Asp-171.

It belongs to the ribulose-phosphate 3-epimerase family. The cofactor is a divalent metal cation.

It catalyses the reaction D-ribulose 5-phosphate = D-xylulose 5-phosphate. Its pathway is carbohydrate degradation. Catalyzes the reversible epimerization of D-ribulose 5-phosphate to D-xylulose 5-phosphate. This chain is Ribulose-phosphate 3-epimerase, found in Helicobacter pylori (strain J99 / ATCC 700824) (Campylobacter pylori J99).